The sequence spans 80 residues: Small ribosomal subunit protein bS16 (80 aa).

This sequence belongs to the bacterial ribosomal protein bS16 family.

This chain is Small ribosomal subunit protein bS16, found in Nitrosococcus oceani (strain ATCC 19707 / BCRC 17464 / JCM 30415 / NCIMB 11848 / C-107).